Here is a 154-residue protein sequence, read N- to C-terminus: Ribonuclease H (154 aa).

In terms of domain architecture, RNase H type-1 spans 1-142 (MRKQVEIFTD…CDELARAAAG (142 aa)). Residues Asp-10, Glu-48, Asp-70, and Asp-134 each coordinate Mg(2+).

It belongs to the RNase H family. As to quaternary structure, monomer. Requires Mg(2+) as cofactor.

It localises to the cytoplasm. The enzyme catalyses Endonucleolytic cleavage to 5'-phosphomonoester.. Endonuclease that specifically degrades the RNA of RNA-DNA hybrids. In Pectobacterium carotovorum subsp. carotovorum (strain PC1), this protein is Ribonuclease H.